Consider the following 679-residue polypeptide: Protein hook (679 aa).

An interaction with microtubules region spans residues 1-155; sequence MSAPKNEMYY…NIMRALQELE (155 aa). The Calponin-homology (CH) domain maps to 6-123; it reads NEMYYSLLEW…RLLQLVLGCA (118 aa). 2 coiled-coil regions span residues 135–437 and 480–574; these read EIMC…LKCG and QTAL…QEIL.

Belongs to the hook family. As to quaternary structure, homodimer. Interacts with microtubules via its N-terminus.

It localises to the cytoplasm. The protein localises to the cytoskeleton. It is found in the endosome. Its subcellular location is the synapse. Its function is as follows. Involved in endocytic trafficking by stabilizing organelles of the endocytic pathway. Probably acts as a cytoskeletal linker protein required to tether endosome vesicles to the cytoskeleton. Involved in modulation of endocytosis at stages required for down-regulation of membrane proteins that control synapse size. Not involved in synaptic vesicle recycling. Required in R7 cells for boss endocytosis into multivesicular bodies (MVBs). Has a role in regulating adult longevity. The sequence is that of Protein hook from Drosophila melanogaster (Fruit fly).